A 90-amino-acid polypeptide reads, in one-letter code: Keratin-associated protein 19-1 (90 aa).

The interval 5–84 (GSYYGGLGYS…CCRPSYNGGY (80 aa)) is 26 X 2 AA repeats of G-[YCGS].

Belongs to the KRTAP type 19 family. Interacts with hair keratins. In terms of tissue distribution, detected in the upper portion of the hair cortex.

In the hair cortex, hair keratin intermediate filaments are embedded in an interfilamentous matrix, consisting of hair keratin-associated proteins (KRTAP), which are essential for the formation of a rigid and resistant hair shaft through their extensive disulfide bond cross-linking with abundant cysteine residues of hair keratins. The matrix proteins include the high-sulfur and high-glycine-tyrosine keratins. This chain is Keratin-associated protein 19-1 (KRTAP19-1), found in Homo sapiens (Human).